A 417-amino-acid polypeptide reads, in one-letter code: UDP-N-acetylglucosamine 1-carboxyvinyltransferase (417 aa).

22–23 is a phosphoenolpyruvate binding site; it reads KN. R92 contributes to the UDP-N-acetyl-alpha-D-glucosamine binding site. Residue C116 is the Proton donor of the active site. At C116 the chain carries 2-(S-cysteinyl)pyruvic acid O-phosphothioketal. UDP-N-acetyl-alpha-D-glucosamine-binding positions include 121–125, D306, and I328; that span reads RPIDL.

This sequence belongs to the EPSP synthase family. MurA subfamily.

The protein localises to the cytoplasm. The enzyme catalyses phosphoenolpyruvate + UDP-N-acetyl-alpha-D-glucosamine = UDP-N-acetyl-3-O-(1-carboxyvinyl)-alpha-D-glucosamine + phosphate. The protein operates within cell wall biogenesis; peptidoglycan biosynthesis. Functionally, cell wall formation. Adds enolpyruvyl to UDP-N-acetylglucosamine. In Buchnera aphidicola subsp. Schizaphis graminum (strain Sg), this protein is UDP-N-acetylglucosamine 1-carboxyvinyltransferase.